Here is a 309-residue protein sequence, read N- to C-terminus: tRNA uridine(34) hydroxylase (309 aa).

In terms of domain architecture, Rhodanese spans 130-224 (SDPDTIVIDT…YLEEVPQEES (95 aa)). The active-site Cysteine persulfide intermediate is the C184.

Belongs to the TrhO family.

The enzyme catalyses uridine(34) in tRNA + AH2 + O2 = 5-hydroxyuridine(34) in tRNA + A + H2O. Catalyzes oxygen-dependent 5-hydroxyuridine (ho5U) modification at position 34 in tRNAs. The sequence is that of tRNA uridine(34) hydroxylase from Rhizobium johnstonii (strain DSM 114642 / LMG 32736 / 3841) (Rhizobium leguminosarum bv. viciae).